A 125-amino-acid polypeptide reads, in one-letter code: Phosphoribosyl-AMP cyclohydrolase (125 aa).

Residue Asp74 participates in Mg(2+) binding. Residue Cys75 coordinates Zn(2+). Asp76 and Asp78 together coordinate Mg(2+). Residues Cys92 and Cys99 each coordinate Zn(2+).

The protein belongs to the PRA-CH family. Homodimer. Mg(2+) is required as a cofactor. It depends on Zn(2+) as a cofactor.

The protein resides in the cytoplasm. It catalyses the reaction 1-(5-phospho-beta-D-ribosyl)-5'-AMP + H2O = 1-(5-phospho-beta-D-ribosyl)-5-[(5-phospho-beta-D-ribosylamino)methylideneamino]imidazole-4-carboxamide. It participates in amino-acid biosynthesis; L-histidine biosynthesis; L-histidine from 5-phospho-alpha-D-ribose 1-diphosphate: step 3/9. In terms of biological role, catalyzes the hydrolysis of the adenine ring of phosphoribosyl-AMP. This Geotalea uraniireducens (strain Rf4) (Geobacter uraniireducens) protein is Phosphoribosyl-AMP cyclohydrolase.